The sequence spans 119 residues: Ribonuclease P protein component (119 aa).

Belongs to the RnpA family. As to quaternary structure, consists of a catalytic RNA component (M1 or rnpB) and a protein subunit.

The enzyme catalyses Endonucleolytic cleavage of RNA, removing 5'-extranucleotides from tRNA precursor.. Functionally, RNaseP catalyzes the removal of the 5'-leader sequence from pre-tRNA to produce the mature 5'-terminus. It can also cleave other RNA substrates such as 4.5S RNA. The protein component plays an auxiliary but essential role in vivo by binding to the 5'-leader sequence and broadening the substrate specificity of the ribozyme. The chain is Ribonuclease P protein component from Sodalis glossinidius (strain morsitans).